A 290-amino-acid polypeptide reads, in one-letter code: Flap endonuclease Xni (290 aa).

Position 125 (Asp125) interacts with Mg(2+). In terms of domain architecture, 5'-3' exonuclease spans 181–275 (VKTSQLIDFW…DIRLTTSSSA (95 aa)). K(+) contacts are provided by Leu192, Val203, and Ile206. Positions 205-210 (GIGQVT) are interaction with DNA.

This sequence belongs to the Xni family. It depends on Mg(2+) as a cofactor. K(+) serves as cofactor.

Has flap endonuclease activity. During DNA replication, flap endonucleases cleave the 5'-overhanging flap structure that is generated by displacement synthesis when DNA polymerase encounters the 5'-end of a downstream Okazaki fragment. The chain is Flap endonuclease Xni from Colwellia psychrerythraea (strain 34H / ATCC BAA-681) (Vibrio psychroerythus).